A 145-amino-acid chain; its full sequence is Large ribosomal subunit protein uL11 (145 aa).

The protein belongs to the universal ribosomal protein uL11 family. In terms of assembly, part of the ribosomal stalk of the 50S ribosomal subunit. Interacts with L10 and the large rRNA to form the base of the stalk. L10 forms an elongated spine to which L12 dimers bind in a sequential fashion forming a multimeric L10(L12)X complex. Post-translationally, one or more lysine residues are methylated.

Functionally, forms part of the ribosomal stalk which helps the ribosome interact with GTP-bound translation factors. This chain is Large ribosomal subunit protein uL11, found in Rickettsia felis (strain ATCC VR-1525 / URRWXCal2) (Rickettsia azadi).